The primary structure comprises 266 residues: Tryptophan synthase alpha chain (266 aa).

Active-site proton acceptor residues include glutamate 47 and aspartate 58.

It belongs to the TrpA family. As to quaternary structure, tetramer of two alpha and two beta chains.

The catalysed reaction is (1S,2R)-1-C-(indol-3-yl)glycerol 3-phosphate + L-serine = D-glyceraldehyde 3-phosphate + L-tryptophan + H2O. It functions in the pathway amino-acid biosynthesis; L-tryptophan biosynthesis; L-tryptophan from chorismate: step 5/5. Functionally, the alpha subunit is responsible for the aldol cleavage of indoleglycerol phosphate to indole and glyceraldehyde 3-phosphate. The protein is Tryptophan synthase alpha chain of Leptospira biflexa serovar Patoc (strain Patoc 1 / Ames).